The following is a 195-amino-acid chain: Imidazoleglycerol-phosphate dehydratase (195 aa).

This sequence belongs to the imidazoleglycerol-phosphate dehydratase family.

It is found in the cytoplasm. The enzyme catalyses D-erythro-1-(imidazol-4-yl)glycerol 3-phosphate = 3-(imidazol-4-yl)-2-oxopropyl phosphate + H2O. Its pathway is amino-acid biosynthesis; L-histidine biosynthesis; L-histidine from 5-phospho-alpha-D-ribose 1-diphosphate: step 6/9. This chain is Imidazoleglycerol-phosphate dehydratase, found in Geobacter sulfurreducens (strain ATCC 51573 / DSM 12127 / PCA).